The following is a 286-amino-acid chain: MSGKEESSNYAATAEEEAVNQGFVLPEGEIMPNTVFVGGIDITMDEIEIRDFFTRFGNVKEVKIITDRTGVSKGYGFISFSDEVDVQKIVKSQISFHGKKLKLGPAIRKICTYVQPRPVVLSHPTPFHHAWNNQNADSYIQHSPIVSPITQYVQACPYPSSPPMAIQQIPVGCQQPGYFQVSPQWPADQRSYMFPTPAFTFNYHCCDMDPNGGEPIPREYPIDQTVSASGANPQKRYVEMSTQTIVSCLFDPANKFHSFVSQEDYLKDNRVHHLRRRESVIKRVSK.

The RRM domain maps to N33–V114. Residues A155 to Q180 form the DAZ domain.

This sequence belongs to the RRM DAZ family. Interacts with the C-terminus of pabp1 and with epabp. Prior to oocyte maturation, found in a complex with epabp and pum2 proteins and spdy1 mRNA; pum2 dissociates from the complex during maturation. In terms of tissue distribution, germ-line specific. Oocyte mRNA expression is first restricted to the granulo-fibrillar material (GFM) of the mitochondrial cloud and then to the oocyte germ plasm at the vegetal cortex. Remains an mRNA component of the germ plasm until the neurula stage. In 2-8 cell embryos, expressed in the germ plasm matrix between germinal granules and mitochondria. Expressed in primordial germ cells (PGCs) later in embryogenesis. In addition to the ovaries of adult females, expressed in the testis of adult and juvenile males in spermatogonia and spermatocytes. The protein is restricted to the embryonic germ plasm and primordial germ cells.

It is found in the cytoplasm. Its function is as follows. RNA-binding protein that is required for primordial germ cell (PGC) differentiation and indirectly necessary for the migration of PGCs through the endoderm. May promote meiotic cell division during spermatogenesis. Shows a preference for G- and U-rich RNAs and probably binds the 3'-UTR of target mRNAs. Stimulates the initiation of translation of mRNAs through the recruitment of poly(A)-binding proteins (PABPs). This chain is Deleted in azoospermia-like-A (dazl-a), found in Xenopus laevis (African clawed frog).